The primary structure comprises 364 residues: 1-acyl-sn-glycerol-3-phosphate acyltransferase epsilon (364 aa).

Helical transmembrane passes span 15–35 (LLPSVVLLGTAPTYVLAWGVW) and 61–81 (MVLFFFENYTGVQILLYGDLP). Residues 93–98 (HQSTVD) carry the HXXXXD motif motif. The chain crosses the membrane as a helical span at residues 344–364 (LYVNTWIYGTLLGCLWVTIKA).

This sequence belongs to the 1-acyl-sn-glycerol-3-phosphate acyltransferase family. As to expression, widely expressed.

The protein localises to the endoplasmic reticulum membrane. The protein resides in the nucleus envelope. It is found in the mitochondrion. It catalyses the reaction a 1-acyl-sn-glycero-3-phosphate + an acyl-CoA = a 1,2-diacyl-sn-glycero-3-phosphate + CoA. It carries out the reaction 1-(9Z-octadecenoyl)-sn-glycero-3-phosphate + tetradecanoyl-CoA = 1-(9Z)-octadecenoyl-2-tetradecanoyl-sn-glycero-3-phosphate + CoA. The enzyme catalyses pentadecanoyl-CoA + 1-(9Z-octadecenoyl)-sn-glycero-3-phosphate = 1-(9Z)-octadecenoyl-2-pentadecanoyl-sn-glycero-3-phosphate + CoA. The catalysed reaction is 1-(9Z-octadecenoyl)-sn-glycero-3-phosphate + octadecanoyl-CoA = 1-(9Z-octadecenoyl)-2-octadecanoyl-sn-glycero-3-phosphate + CoA. It catalyses the reaction nonadecanoyl-CoA + 1-(9Z-octadecenoyl)-sn-glycero-3-phosphate = 1-(9Z)-octadecenoyl-2-nonadecanoyl-sn-glycero-3-phosphate + CoA. It carries out the reaction 1-(9Z-octadecenoyl)-sn-glycero-3-phosphoethanolamine + (9Z)-octadecenoyl-CoA = 1,2-di-(9Z-octadecenoyl)-sn-glycero-3-phosphoethanolamine + CoA. The enzyme catalyses 1-(9Z-octadecenoyl)-sn-glycero-3-phosphocholine + (9Z)-octadecenoyl-CoA = 1,2-di-(9Z-octadecenoyl)-sn-glycero-3-phosphocholine + CoA. The catalysed reaction is 1-(9Z-octadecenoyl)-sn-glycero-3-phospho-(1D-myo-inositol) + (5Z,8Z,11Z,14Z)-eicosatetraenoyl-CoA = 1-(9Z-octadecenoyl)-2-(5Z,8Z,11Z,14Z-eicosatetraenoyl)-sn-glycero-3-phospho-1D-myo-inositol + CoA. It catalyses the reaction 1-(9Z-octadecenoyl)-sn-glycero-3-phospho-L-serine + (9Z)-octadecenoyl-CoA = 1,2-di-(9Z)-octadecenoyl-sn-glycero-3-phospho-L-serine + CoA. It carries out the reaction 1-(9Z-octadecenoyl)-sn-glycero-3-phospho-L-serine + (5Z,8Z,11Z,14Z)-eicosatetraenoyl-CoA = 1-(9Z-octadecenoyl)-2-(5Z,8Z,11Z,14Z-eicosatetraenoyl)-sn-glycero-3-phospho-L-serine + CoA. The enzyme catalyses 1-hexadecanoyl-sn-glycero-3-phosphate + (9Z)-octadecenoyl-CoA = 1-hexadecanoyl-2-(9Z-octadecenoyl)-sn-glycero-3-phosphate + CoA. The catalysed reaction is 1-heptadecanoyl-sn-glycero-3-phosphate + (9Z)-octadecenoyl-CoA = 1-heptadecanoyl-2-(9Z)-octadecenoyl-sn-glycero-3-phosphate + CoA. It catalyses the reaction 1-(5Z,8Z,11Z,14Z-eicosatetraenoyl)-sn-glycero-3-phosphate + (9Z)-octadecenoyl-CoA = 1-(5Z,8Z,11Z,14Z)-eicosatetraenoyl-2-(9Z)-octadecenoyl-sn-glycero-3-phosphate + CoA. It carries out the reaction 1-octadecanoyl-sn-glycero-3-phosphate + (9Z)-octadecenoyl-CoA = 1-octadecanoyl-2-(9Z-octadecenoyl)-sn-glycero-3-phosphate + CoA. The enzyme catalyses 1-(9Z-octadecenoyl)-sn-glycero-3-phosphate + (5Z,8Z,11Z,14Z)-eicosatetraenoyl-CoA = 1-(9Z)-octadecenoyl-2-(5Z,8Z,11Z,14Z)-eicosatetraenoyl-sn-glycero-3-phosphate + CoA. The catalysed reaction is heptadecanoyl-CoA + 1-(9Z-octadecenoyl)-sn-glycero-3-phosphate = 1-(9Z)-octadecenoyl-2-heptadecanoyl-sn-glycero-3-phosphate + CoA. It catalyses the reaction 1-(9Z-octadecenoyl)-sn-glycero-3-phosphocholine + (5Z,8Z,11Z,14Z)-eicosatetraenoyl-CoA = 1-(9Z)-octadecenoyl-2-(5Z,8Z,11Z,14Z)-icosatetraenoyl-sn-glycero-3-phosphocholine + CoA. It carries out the reaction 1-(9Z-octadecenoyl)-sn-glycero-3-phosphate + (9Z)-octadecenoyl-CoA = 1,2-di-(9Z-octadecenoyl)-sn-glycero-3-phosphate + CoA. The enzyme catalyses 1-(9Z-octadecenoyl)-sn-glycero-3-phosphate + hexadecanoyl-CoA = 1-hexadecanoyl-2-(9Z-octadecenoyl)-sn-glycero-3-phosphate + CoA. It participates in phospholipid metabolism; CDP-diacylglycerol biosynthesis; CDP-diacylglycerol from sn-glycerol 3-phosphate: step 2/3. In terms of biological role, converts 1-acyl-sn-glycerol-3-phosphate (lysophosphatidic acid or LPA) into 1,2-diacyl-sn-glycerol-3-phosphate (phosphatidic acid or PA) by incorporating an acyl moiety at the sn-2 position of the glycerol backbone. Acts on LPA containing saturated or unsaturated fatty acids C15:0-C20:4 at the sn-1 position using C18:1-CoA as the acyl donor. Also acts on lysophosphatidylethanolamine using oleoyl-CoA, but not arachidonoyl-CoA, and lysophosphatidylinositol using arachidonoyl-CoA, but not oleoyl-CoA. Activity toward lysophosphatidylglycerol not detectable. In Homo sapiens (Human), this protein is 1-acyl-sn-glycerol-3-phosphate acyltransferase epsilon (AGPAT5).